A 247-amino-acid chain; its full sequence is Trypsin-4 (247 aa).

Positions 1-15 (MKISIFFAFLGAAVA) are cleaved as a signal peptide. Residues 16-23 (LPVNDDDK) constitute a propeptide, activation peptide. A Peptidase S1 domain is found at 24–245 (IVGGYTCPKH…YLSWIQETMA (222 aa)). 6 disulfides stabilise this stretch: cysteine 30–cysteine 161, cysteine 49–cysteine 65, cysteine 133–cysteine 234, cysteine 140–cysteine 207, cysteine 172–cysteine 186, and cysteine 197–cysteine 221. The active-site Charge relay system is histidine 64. Ca(2+) is bound by residues glutamate 76, asparagine 78, valine 81, and glutamate 86. Aspartate 108 (charge relay system) is an active-site residue. Serine 201 acts as the Charge relay system in catalysis.

It belongs to the peptidase S1 family. It depends on Ca(2+) as a cofactor. Post-translationally, proteolytically cleaved and activated by an autocatalytic mechanism. Cleavage by CTRC inhibits autoactivation.

It is found in the secreted. The protein resides in the extracellular space. The catalysed reaction is Preferential cleavage: Arg-|-Xaa, Lys-|-Xaa.. With respect to regulation, activated by autocatalytic cleavage. Cleavage by CTRC inhibits autoactivation. Functionally, serine protease capable of autoactivation. The protein is Trypsin-4 of Rattus norvegicus (Rat).